A 367-amino-acid chain; its full sequence is Aminomethyltransferase (367 aa).

Belongs to the GcvT family. As to quaternary structure, the glycine cleavage system is composed of four proteins: P, T, L and H.

It carries out the reaction N(6)-[(R)-S(8)-aminomethyldihydrolipoyl]-L-lysyl-[protein] + (6S)-5,6,7,8-tetrahydrofolate = N(6)-[(R)-dihydrolipoyl]-L-lysyl-[protein] + (6R)-5,10-methylene-5,6,7,8-tetrahydrofolate + NH4(+). Functionally, the glycine cleavage system catalyzes the degradation of glycine. The sequence is that of Aminomethyltransferase from Shouchella clausii (strain KSM-K16) (Alkalihalobacillus clausii).